A 90-amino-acid polypeptide reads, in one-letter code: Small ribosomal subunit protein bS16 (90 aa).

Belongs to the bacterial ribosomal protein bS16 family.

The polypeptide is Small ribosomal subunit protein bS16 (Fervidobacterium nodosum (strain ATCC 35602 / DSM 5306 / Rt17-B1)).